Reading from the N-terminus, the 161-residue chain is Tropomyosin-2 (161 aa).

Positions 1–161 (MEKIKEKLNS…DEIANSLENL (161 aa)) form a coiled coil. Residues 32 to 43 (LEQSNTEKENEI) are compositionally biased toward basic and acidic residues. The interval 32–97 (LEQSNTEKEN…NQDLEQQLED (66 aa)) is disordered. The residue at position 55 (S55) is a Phosphoserine. A compositionally biased stretch (polar residues) spans 62 to 83 (SQLSDTKQLAEDSNNLRSNNEN). Residues S116 and S157 each carry the phosphoserine modification.

Homodimer.

Its subcellular location is the cytoplasm. The protein localises to the cytoskeleton. Functionally, involved in cell morphogenesis. Binds to F-actin and stabilizes the actin filaments. This is Tropomyosin-2 (TPM2) from Saccharomyces cerevisiae (strain ATCC 204508 / S288c) (Baker's yeast).